The primary structure comprises 359 residues: Fructose-bisphosphate aldolase (359 aa).

D-glyceraldehyde 3-phosphate is bound at residue Ser50. Asp83 acts as the Proton donor in catalysis. Zn(2+) contacts are provided by His84, Asp105, Glu142, and His198. Position 199 (Gly199) interacts with dihydroxyacetone phosphate. Residue His232 participates in Zn(2+) binding. Residues 233–235 (GSS) and 275–278 (NIDT) contribute to the dihydroxyacetone phosphate site.

It belongs to the class II fructose-bisphosphate aldolase family. Requires Zn(2+) as cofactor.

The catalysed reaction is beta-D-fructose 1,6-bisphosphate = D-glyceraldehyde 3-phosphate + dihydroxyacetone phosphate. It functions in the pathway carbohydrate degradation; glycolysis; D-glyceraldehyde 3-phosphate and glycerone phosphate from D-glucose: step 4/4. In terms of biological role, catalyzes the aldol condensation of dihydroxyacetone phosphate (DHAP or glycerone-phosphate) with glyceraldehyde 3-phosphate (G3P) to form fructose 1,6-bisphosphate (FBP) in gluconeogenesis and the reverse reaction in glycolysis. In Nostoc commune, this protein is Fructose-bisphosphate aldolase (fba).